The sequence spans 594 residues: Proteasome-associated ATPase (594 aa).

Over residues M1 to T12 the composition is skewed to polar residues. A disordered region spans residues M1–Y20. A coiled-coil region spans residues R18–K71. G282–L287 provides a ligand contact to ATP. Residues Y593 to L594 form a docks into pockets in the proteasome alpha-ring region.

It belongs to the AAA ATPase family. In terms of assembly, homohexamer. Assembles into a hexameric ring structure that caps the 20S proteasome core. Strongly interacts with the prokaryotic ubiquitin-like protein Pup through a hydrophobic interface; the interacting region of ARC lies in its N-terminal coiled-coil domain. There is one Pup binding site per ARC hexamer ring. Upon ATP-binding, the C-terminus of ARC interacts with the alpha-rings of the proteasome core, possibly by binding to the intersubunit pockets.

It functions in the pathway protein degradation; proteasomal Pup-dependent pathway. In terms of biological role, ATPase which is responsible for recognizing, binding, unfolding and translocation of pupylated proteins into the bacterial 20S proteasome core particle. May be essential for opening the gate of the 20S proteasome via an interaction with its C-terminus, thereby allowing substrate entry and access to the site of proteolysis. Thus, the C-termini of the proteasomal ATPase may function like a 'key in a lock' to induce gate opening and therefore regulate proteolysis. This Renibacterium salmoninarum (strain ATCC 33209 / DSM 20767 / JCM 11484 / NBRC 15589 / NCIMB 2235) protein is Proteasome-associated ATPase.